Consider the following 230-residue polypeptide: Cytidylate kinase (230 aa).

12–20 is an ATP binding site; it reads GPSGAGKGT.

This sequence belongs to the cytidylate kinase family. Type 1 subfamily.

The protein resides in the cytoplasm. The catalysed reaction is CMP + ATP = CDP + ADP. It carries out the reaction dCMP + ATP = dCDP + ADP. The protein is Cytidylate kinase of Shewanella putrefaciens (strain CN-32 / ATCC BAA-453).